The primary structure comprises 903 residues: Immunoglobulin superfamily member 22 (903 aa).

Ig-like domains follow at residues 67–158 (PEFV…LLVT), 232–322 (EAIR…AELT), 418–508 (PIKF…AIVT), and 606–696 (PSVL…LHLS). 2 consecutive Fibronectin type-III domains span residues 703–798 (FASQ…AKDP) and 804–898 (LVQD…MPPP).

This Homo sapiens (Human) protein is Immunoglobulin superfamily member 22 (IGSF22).